A 207-amino-acid polypeptide reads, in one-letter code: MADKGTLYIISAPSGAGKTSLVAALVDKLAQVRISISHTTRAMRPGEKDGVNYHFTDRDCFVRQVEQGRFLEHAQVFGNLYGTSADWVAQTLRTGDDVILEIDWQGATQIRKQLPDSVSIFILPPSLEALAGRLRGRETDDETVIQQRLDGAQEEMSHYGEFDYLVVNDDFQRALYELEAIVEARRLVTARQVARQAATLQNLLARR.

The region spanning 5–183 (GTLYIISAPS…ALYELEAIVE (179 aa)) is the Guanylate kinase-like domain. Position 12–19 (12–19 (APSGAGKT)) interacts with ATP.

The protein belongs to the guanylate kinase family.

The protein localises to the cytoplasm. The catalysed reaction is GMP + ATP = GDP + ADP. In terms of biological role, essential for recycling GMP and indirectly, cGMP. In Alcanivorax borkumensis (strain ATCC 700651 / DSM 11573 / NCIMB 13689 / SK2), this protein is Guanylate kinase.